The sequence spans 324 residues: tRNA dimethylallyltransferase (324 aa).

An ATP-binding site is contributed by 17–24; the sequence is GPTASGKT. Substrate is bound at residue 19 to 24; sequence TASGKT. Interaction with substrate tRNA regions lie at residues 42-45, 166-170, and 251-256; these read DSAL, QRIQR, and RCVGYR.

This sequence belongs to the IPP transferase family. Monomer. Mg(2+) serves as cofactor.

It carries out the reaction adenosine(37) in tRNA + dimethylallyl diphosphate = N(6)-dimethylallyladenosine(37) in tRNA + diphosphate. Catalyzes the transfer of a dimethylallyl group onto the adenine at position 37 in tRNAs that read codons beginning with uridine, leading to the formation of N6-(dimethylallyl)adenosine (i(6)A). This is tRNA dimethylallyltransferase from Burkholderia thailandensis (strain ATCC 700388 / DSM 13276 / CCUG 48851 / CIP 106301 / E264).